A 70-amino-acid polypeptide reads, in one-letter code: U2-agatoxin-Ao1a (70 aa).

Positions 1-20 (MRAIISLFLISAMVFSMIQA) are cleaved as a signal peptide. A propeptide spanning residues 21 to 34 (VPEEEGLQLSEDER) is cleaved from the precursor. Intrachain disulfides connect C37-C53, C44-C58, and C52-C68. A Leucine amide modification is found at L69.

The protein belongs to the neurotoxin 01 (U2-agtx) family. In terms of tissue distribution, expressed by the venom gland.

It is found in the secreted. In terms of biological role, insect active toxin causing rapid but reversible paralysis in crickets. No activity shown in mammals. Suppresses the excitatory postsynaptic potentials evoked in lobster neuromuscular synaptic preparations, possibly by blocking the presynaptic calcium channel. Induces instantaneous reversible paralysis when injected into crickets. Does not show effect on mammalian Cav2.1/CACNA1A, Cav2.2/CACNA1B and Cav2.3/CACNA1E. The protein is U2-agatoxin-Ao1a of Agelena orientalis (Funnel-web spider).